Here is a 461-residue protein sequence, read N- to C-terminus: Decaprenylphosphoryl-beta-D-ribose oxidase (461 aa).

Residues 19–194 (TAPSVANVLR…MRATIEMTPT (176 aa)) enclose the FAD-binding PCMH-type domain. FAD is bound by residues 53–63 (ARGLGRSYGDN), Gly117, 122–125 (TVGG), 129–132 (CDIH), Ile184, and Tyr415.

It belongs to the DprE1 family. In terms of assembly, monomer. Although forming apparent dimer in crystals, DprE1 does not dimerize appreciably in solution. Interacts with DprE2 to form an epimerase complex.

It is found in the periplasm. It carries out the reaction trans,octa-cis-decaprenylphospho-beta-D-ribofuranose + FAD + H(+) = trans,octa-cis-decaprenylphospho-beta-D-erythro-pentofuranosid-2-ulose + FADH2. Its pathway is cell wall biogenesis; cell wall polysaccharide biosynthesis. Its activity is regulated as follows. Is inhibited by 8-nitro-benzothiazinones (BTZs) such as BTZ043 and PBTZ169; BTZs are a new class of antimycobacterial agents that kill M.tuberculosis in vitro, ex vivo, and in mouse models of tuberculosis. Is also inhibited by dinitrobenzamide derivatives (DNBs), which thus block formation of both cell-wall lipoarabinomannan and arabinogalactan via inhibition of decaprenyl-phospho-arabinose (DPA) synthesis; DNBs show high activity against intracellular growth of M.tuberculosis inside macrophages, including extensively drug resistant (XDR) strains. BTZs and DNBs are suicide inhibitors that act via covalent modification of DprE1; the essential nitro group of these compounds is reduced by DprE1 to a nitroso group, which then specifically reacts with Cys-387 of DprE1 to form an irreversible semimercaptal adduct. Many other compounds with diverse scaffolds were found to act as either covalent (e.g. nitroquinoxalines, nitroimidazoles) or non-covalent (e.g. the benzothiazole derivative TCA1, the 2-carboxyquinoxaline Ty38C, 8-pyrrole-benzothiazinones, 1,4-azaindoles, pyrazolopyridones, 4-aminoquinolone piperidine amides) DprE1 inhibitors. Functionally, component of the DprE1-DprE2 complex that catalyzes the 2-step epimerization of decaprenyl-phospho-ribose (DPR) to decaprenyl-phospho-arabinose (DPA), a key precursor that serves as the arabinose donor required for the synthesis of cell-wall arabinans. DprE1 catalyzes the first step of epimerization, namely FAD-dependent oxidation of the C2' hydroxyl of DPR to yield the keto intermediate decaprenyl-phospho-2'-keto-D-arabinose (DPX). The intermediate DPX is then transferred to DprE2 subunit of the epimerase complex, most probably through a 'substrate channel' at the interface of DprE1-DprE2 complex. Can also use farnesyl-phosphoryl-beta-D-ribofuranose (FPR) as substrate in vitro. In terms of biological role, dprE1 is a highly vulnerable and fully validated tuberculosis drug target. The protein is Decaprenylphosphoryl-beta-D-ribose oxidase of Mycobacterium tuberculosis (strain CDC 1551 / Oshkosh).